The sequence spans 258 residues: UBX domain-containing protein 2A (258 aa).

A required for interaction with CHRNA3 region spans residues 1 to 152 (MKEVDNLDSI…SATPRIVSKA (152 aa)). The interval 1–165 (MKEVDNLDSI…EVDNKSTLSA (165 aa)) is required for inhibition of CHRNA3 ubiquitination and translocation of CHRNA3 to the plasma membrane resulting in an increase in acetylcholine-gated nicotinic acetylcholine receptor currents. The SEP domain occupies 61–125 (QVDVNIKLWK…VEDKKNEVCM (65 aa)). The required for interaction with VCP stretch occupies residues 168-258 (LNNLEPITRI…QKTAEPFRKL (91 aa)). A UBX domain is found at 170–247 (NLEPITRIQI…DLQNAVIIQR (78 aa)).

As to quaternary structure, part of a complex composed of STUB1/CHIP, VCP/p97, CHRNA3, and UBXN2A that modulates the ubiquitination and endoplasmic reticulum-associated degradation (ERAD) of CHRNA3. Within the complex UBXN2A acts as a scaffold protein required for the interaction of CHRNA3 with VCP/p97, this interaction also inhibits CHRNA3 ubiquitination by STUB1/CHIP and subsequently ERAD. Interacts (via SEP domain) with CHRNA3 and interacts (via UBX domain) with VCP/P97; these interactions are required for the interaction of CHRNA3 with the STUB1-VCP-UBXN2A complex. Interacts with HSPA9/MOT-2 (via SBD domain); the interaction inhibits HSPA9/MOT-2 interaction with and degradation of p53, thereby promotes p53 translocation to the nucleus. Interacts with RICTOR. Ubiquitinated.

The protein localises to the golgi apparatus. The protein resides in the endoplasmic reticulum. It localises to the perikaryon. Its subcellular location is the cell projection. It is found in the dendrite. The protein localises to the nucleus. The protein resides in the cytoplasm. Acts to repress the ubiquitination and subsequent endoplasmic reticulum-associated degradation of CHRNA3 by the STUB1-VCP-UBXN2A complex in cortical neurons. Also acts to promote the translocation of CHRNA3 to the plasma membrane and subsequently increases plasma membrane acetylcholine-gated ion-channel activation. Plays a role in the inhibition of STUB1-mediated TP53 degradation, via its interaction with HSPA9 which acts to inhibit TP53 binding to HSPA9. Positively mediates the ubiquitination and proteosomal degradation of RICTOR, may thereby act as a negative regulator of the mTORC2 pathway. This Rattus norvegicus (Rat) protein is UBX domain-containing protein 2A.